Here is a 642-residue protein sequence, read N- to C-terminus: Threonine--tRNA ligase (642 aa).

The TGS domain occupies 1-61 (MPVITLPDGS…SEDANLVIFT (61 aa)). The interval 243–534 (DHRKLAKKFD…LIEHYEGSFP (292 aa)) is catalytic. The Zn(2+) site is built by Cys-334, His-385, and His-511.

This sequence belongs to the class-II aminoacyl-tRNA synthetase family. As to quaternary structure, homodimer. Zn(2+) serves as cofactor.

The protein resides in the cytoplasm. It carries out the reaction tRNA(Thr) + L-threonine + ATP = L-threonyl-tRNA(Thr) + AMP + diphosphate + H(+). In terms of biological role, catalyzes the attachment of threonine to tRNA(Thr) in a two-step reaction: L-threonine is first activated by ATP to form Thr-AMP and then transferred to the acceptor end of tRNA(Thr). Also edits incorrectly charged L-seryl-tRNA(Thr). This chain is Threonine--tRNA ligase, found in Cellvibrio japonicus (strain Ueda107) (Pseudomonas fluorescens subsp. cellulosa).